The chain runs to 338 residues: Large ribosomal subunit protein uL3 (338 aa).

Basic residues predominate over residues 228 to 237; the sequence is HKHRKGHRRT. The tract at residues 228 to 255 is disordered; it reads HKHRKGHRRTGTIGPQAPALMFTQPRPG.

Belongs to the universal ribosomal protein uL3 family. As to quaternary structure, part of the 50S ribosomal subunit. Forms a cluster with proteins L14 and L24e.

In terms of biological role, one of the primary rRNA binding proteins, it binds directly near the 3'-end of the 23S rRNA, where it nucleates assembly of the 50S subunit. In Pyrobaculum calidifontis (strain DSM 21063 / JCM 11548 / VA1), this protein is Large ribosomal subunit protein uL3.